We begin with the raw amino-acid sequence, 203 residues long: Small ribosomal subunit protein uS4 (203 aa).

In terms of domain architecture, S4 RNA-binding spans 93–156; sequence RRLDNVVYRL…AKVPAILEAV (64 aa).

It belongs to the universal ribosomal protein uS4 family. As to quaternary structure, part of the 30S ribosomal subunit. Contacts protein S5. The interaction surface between S4 and S5 is involved in control of translational fidelity.

Its function is as follows. One of the primary rRNA binding proteins, it binds directly to 16S rRNA where it nucleates assembly of the body of the 30S subunit. In terms of biological role, with S5 and S12 plays an important role in translational accuracy. The protein is Small ribosomal subunit protein uS4 of Streptococcus mutans serotype c (strain ATCC 700610 / UA159).